A 168-amino-acid chain; its full sequence is Phosphopantetheine adenylyltransferase (168 aa).

Thr-10 is a binding site for substrate. ATP is bound by residues 10–11 (TF) and His-18. Substrate is bound by residues Lys-42, Leu-75, and Arg-89. ATP is bound by residues 90 to 92 (GVR), Glu-100, and 125 to 131 (YTYVASS).

This sequence belongs to the bacterial CoaD family. As to quaternary structure, homohexamer. Mg(2+) serves as cofactor.

The protein resides in the cytoplasm. The enzyme catalyses (R)-4'-phosphopantetheine + ATP + H(+) = 3'-dephospho-CoA + diphosphate. It functions in the pathway cofactor biosynthesis; coenzyme A biosynthesis; CoA from (R)-pantothenate: step 4/5. Functionally, reversibly transfers an adenylyl group from ATP to 4'-phosphopantetheine, yielding dephospho-CoA (dPCoA) and pyrophosphate. This chain is Phosphopantetheine adenylyltransferase, found in Prosthecochloris aestuarii (strain DSM 271 / SK 413).